The chain runs to 293 residues: Energy-coupling factor transporter ATP-binding protein EcfA2 (293 aa).

One can recognise an ABC transporter domain in the interval 3 to 246 (ITFQKVEHRY…ADELEKIGVD (244 aa)). ATP is bound at residue 40–47 (GHTGSGKS).

Belongs to the ABC transporter superfamily. Energy-coupling factor EcfA family. As to quaternary structure, forms a stable energy-coupling factor (ECF) transporter complex composed of 2 membrane-embedded substrate-binding proteins (S component), 2 ATP-binding proteins (A component) and 2 transmembrane proteins (T component).

Its subcellular location is the cell membrane. In terms of biological role, ATP-binding (A) component of a common energy-coupling factor (ECF) ABC-transporter complex. Unlike classic ABC transporters this ECF transporter provides the energy necessary to transport a number of different substrates. In Bacillus anthracis, this protein is Energy-coupling factor transporter ATP-binding protein EcfA2.